We begin with the raw amino-acid sequence, 121 residues long: Large ribosomal subunit protein bL31 (121 aa).

The interval 1–97 (MKEGIHPDYK…AKENRAAKRA (97 aa)) is large ribosomal subunit protein bL31. Zn(2+)-binding residues include cysteine 16, cysteine 18, cysteine 36, and cysteine 39. The segment covering 65–80 (ATPAKAEPAKKAPAAE) has biased composition (low complexity). A disordered region spans residues 65–121 (ATPAKAEPAKKAPAAEPAKKVEAAKENRAAKRAKAGKSKKSEAAPAAEAPAADAKPE). The unknown stretch occupies residues 74-121 (KKAPAAEPAKKVEAAKENRAAKRAKAGKSKKSEAAPAAEAPAADAKPE). The span at 81–93 (PAKKVEAAKENRA) shows a compositional bias: basic and acidic residues. Low complexity predominate over residues 107–121 (AAPAAEAPAADAKPE).

It belongs to the bacterial ribosomal protein bL31 family. Type A subfamily. In terms of assembly, part of the 50S ribosomal subunit. It depends on Zn(2+) as a cofactor.

Its function is as follows. Binds the 23S rRNA. The polypeptide is Large ribosomal subunit protein bL31 (Anaeromyxobacter dehalogenans (strain 2CP-C)).